Here is a 280-residue protein sequence, read N- to C-terminus: Lacto-N-neotetraose biosynthesis glycosyltransferase LgtE (280 aa).

This sequence belongs to the glycosyltransferase 25 family.

It functions in the pathway glycan metabolism; lacto-N-neotetraose biosynthesis. It participates in bacterial outer membrane biogenesis; lipooligosaccharide biosynthesis. Its function is as follows. Adds the first galactose to the lacto-N-tetraose chain in lipooligosaccharide (LOS). In Neisseria meningitidis serogroup B (strain ATCC BAA-335 / MC58), this protein is Lacto-N-neotetraose biosynthesis glycosyltransferase LgtE (lgtE).